A 188-amino-acid chain; its full sequence is dCTP deaminase (188 aa).

Residues Lys111 to Arg116, Thr135 to Glu137, Gln156, Tyr170, and Gln180 contribute to the dCTP site. The active-site Proton donor/acceptor is Glu137.

Belongs to the dCTP deaminase family. In terms of assembly, homotrimer.

The enzyme catalyses dCTP + H2O + H(+) = dUTP + NH4(+). Its pathway is pyrimidine metabolism; dUMP biosynthesis; dUMP from dCTP (dUTP route): step 1/2. In terms of biological role, catalyzes the deamination of dCTP to dUTP. In Ralstonia pickettii (strain 12J), this protein is dCTP deaminase.